A 369-amino-acid chain; its full sequence is MRVIVTGGGTGGHIYPALAIAKGILAQRPDAEILYIGTREGMEARLVPEAGIEFSGVSGQGLPRKLSLETLKVGGKSFKALWETKQILKKFKPDLVVGTGGYVAGPVVLTAALFGIPTLLHEQNALPGITNKILTRFVRKVMVTFPESIAHFGVQKKLVLTGLPVRAEIGNISREKGAEDLGLRSDCLTLLVTGGSRGARSINQAMPTVLKHLAGRKDIQVIWATGKATYQETLENLKAQGIQWQRENWRVLEYLKDMPEALACADLFVGRAGATTLAEIMVAGKPGILIPYPLAAENHQEFNARALEKDGAACVILDQDLTGENLWALVQGLLEKPEKLRKMAQAARGLGQPDALNKIVNVCLDTAWK.

Residues 10–12 (TGG), Asn124, Arg166, Ser196, and Gln300 each bind UDP-N-acetyl-alpha-D-glucosamine.

This sequence belongs to the glycosyltransferase 28 family. MurG subfamily.

Its subcellular location is the cell membrane. It catalyses the reaction di-trans,octa-cis-undecaprenyl diphospho-N-acetyl-alpha-D-muramoyl-L-alanyl-D-glutamyl-meso-2,6-diaminopimeloyl-D-alanyl-D-alanine + UDP-N-acetyl-alpha-D-glucosamine = di-trans,octa-cis-undecaprenyl diphospho-[N-acetyl-alpha-D-glucosaminyl-(1-&gt;4)]-N-acetyl-alpha-D-muramoyl-L-alanyl-D-glutamyl-meso-2,6-diaminopimeloyl-D-alanyl-D-alanine + UDP + H(+). Its pathway is cell wall biogenesis; peptidoglycan biosynthesis. In terms of biological role, cell wall formation. Catalyzes the transfer of a GlcNAc subunit on undecaprenyl-pyrophosphoryl-MurNAc-pentapeptide (lipid intermediate I) to form undecaprenyl-pyrophosphoryl-MurNAc-(pentapeptide)GlcNAc (lipid intermediate II). The chain is UDP-N-acetylglucosamine--N-acetylmuramyl-(pentapeptide) pyrophosphoryl-undecaprenol N-acetylglucosamine transferase from Desulfitobacterium hafniense (strain Y51).